The sequence spans 256 residues: Rhamnolipids biosynthesis 3-oxoacyl-[acyl-carrier-protein] reductase (256 aa).

14–38 (VTGGSRGIGQMIAQGLLEAGARVFI) provides a ligand contact to NADP(+). A substrate-binding site is contributed by Ser-148. Tyr-162 functions as the Proton acceptor in the catalytic mechanism.

Belongs to the short-chain dehydrogenases/reductases (SDR) family.

It carries out the reaction a (3R)-hydroxyacyl-[ACP] + NADP(+) = a 3-oxoacyl-[ACP] + NADPH + H(+). It functions in the pathway lipid metabolism; rhamnolipid biosynthesis. Functionally, required for the synthesis of the beta-hydroxy acid moiety of rhamnolipids. This Pseudomonas aeruginosa (strain ATCC 15692 / DSM 22644 / CIP 104116 / JCM 14847 / LMG 12228 / 1C / PRS 101 / PAO1) protein is Rhamnolipids biosynthesis 3-oxoacyl-[acyl-carrier-protein] reductase (rhlG).